Consider the following 363-residue polypeptide: Succinyl-diaminopimelate desuccinylase (363 aa).

A Zn(2+)-binding site is contributed by H63. The active site involves D65. D94 contacts Zn(2+). E123 acts as the Proton acceptor in catalysis. Zn(2+) contacts are provided by E124, E152, and H337.

This sequence belongs to the peptidase M20A family. DapE subfamily. In terms of assembly, homodimer. The cofactor is Zn(2+). It depends on Co(2+) as a cofactor.

The catalysed reaction is N-succinyl-(2S,6S)-2,6-diaminopimelate + H2O = (2S,6S)-2,6-diaminopimelate + succinate. Its pathway is amino-acid biosynthesis; L-lysine biosynthesis via DAP pathway; LL-2,6-diaminopimelate from (S)-tetrahydrodipicolinate (succinylase route): step 3/3. Catalyzes the hydrolysis of N-succinyl-L,L-diaminopimelic acid (SDAP), forming succinate and LL-2,6-diaminopimelate (DAP), an intermediate involved in the bacterial biosynthesis of lysine and meso-diaminopimelic acid, an essential component of bacterial cell walls. The chain is Succinyl-diaminopimelate desuccinylase from Campylobacter concisus (strain 13826).